The sequence spans 380 residues: Beta sliding clamp (380 aa).

This sequence belongs to the beta sliding clamp family. Forms a ring-shaped head-to-tail homodimer around DNA which binds and tethers DNA polymerases and other proteins to the DNA. The DNA replisome complex has a single clamp-loading complex (3 tau and 1 each of delta, delta', psi and chi subunits) which binds 3 Pol III cores (1 core on the leading strand and 2 on the lagging strand) each with a beta sliding clamp dimer. Additional proteins in the replisome are other copies of gamma, psi and chi, Ssb, DNA helicase and RNA primase.

It is found in the cytoplasm. Functionally, confers DNA tethering and processivity to DNA polymerases and other proteins. Acts as a clamp, forming a ring around DNA (a reaction catalyzed by the clamp-loading complex) which diffuses in an ATP-independent manner freely and bidirectionally along dsDNA. Initially characterized for its ability to contact the catalytic subunit of DNA polymerase III (Pol III), a complex, multichain enzyme responsible for most of the replicative synthesis in bacteria; Pol III exhibits 3'-5' exonuclease proofreading activity. The beta chain is required for initiation of replication as well as for processivity of DNA replication. This is Beta sliding clamp (dnaN) from Lactococcus lactis subsp. lactis (strain IL1403) (Streptococcus lactis).